The following is a 101-amino-acid chain: Small ribosomal subunit protein uS10 (101 aa).

It belongs to the universal ribosomal protein uS10 family. In terms of assembly, part of the 30S ribosomal subunit.

In terms of biological role, involved in the binding of tRNA to the ribosomes. The chain is Small ribosomal subunit protein uS10 from Mycobacterium ulcerans (strain Agy99).